The sequence spans 402 residues: B3 domain-containing protein Os01g0723500 (402 aa).

A DNA-binding region (TF-B3 1) is located at residues 18–121 (RPHFFKVLVG…RFTAMVFDRT (104 aa)). The disordered stretch occupies residues 126–203 (EDLMGGGGGD…VKNEEDADEL (78 aa)). Over residues 152–162 (DAARPKKDSVG) the composition is skewed to basic and acidic residues. The span at 173-186 (SGGQPLQIVDSSWT) shows a compositional bias: polar residues. Positions 289–381 (CVIRMSTMHV…EFRVHIFRVV (93 aa)) form a DNA-binding region, TF-B3 2.

It is found in the nucleus. In Oryza sativa subsp. japonica (Rice), this protein is B3 domain-containing protein Os01g0723500.